A 328-amino-acid chain; its full sequence is NAD(P)H-dependent pentose reductase (328 aa).

The Proton donor role is filled by tyrosine 50. Residue histidine 112 coordinates substrate. Residues 174–175, 223–232, and 279–289 contribute to the NAD(+) site; these read AN, SSFGPQSFVE, and KSNNVDRLKQN.

This sequence belongs to the aldo/keto reductase family.

Pentose reductase with a broad substrate affinity involved in pentose catabolism. Has highest reductase activities with L-arabinose and D-xylose as substrates, and displays much lower activities with D-ribose, D-galactose and D-glucose. Has highest dehydrogenase activity with L-arabitol as substrate, followed by xylitol and D-sorbitol. May be responsible for the first step of the L-arabinose catabolic pathway. This chain is NAD(P)H-dependent pentose reductase (PRD1), found in Pyricularia oryzae (strain 70-15 / ATCC MYA-4617 / FGSC 8958) (Rice blast fungus).